Reading from the N-terminus, the 31-residue chain is Cyclotide vibi-F (31 aa).

Residues 1–31 (GTIPCGESCVFIPCLTSALGCSCKSKVCYKN) constitute a cross-link (cyclopeptide (Gly-Asn)). Intrachain disulfides connect C5-C21, C9-C23, and C14-C28.

Post-translationally, this is a cyclic peptide.

Functionally, probably participates in a plant defense mechanism. This is Cyclotide vibi-F from Viola biflora (Yellow wood violet).